A 272-amino-acid polypeptide reads, in one-letter code: Carbonic anhydrase (272 aa).

Zn(2+) contacts are provided by cysteine 39, histidine 98, and cysteine 101.

Belongs to the beta-class carbonic anhydrase family. A hexamer formed by a trimer of dimers. Purified from carboxysomes with the both RuBisCO subunits and the full-length form of CcmM, probably interacts with the N-terminus of CcmM. Zn(2+) serves as cofactor.

The protein localises to the carboxysome. It catalyses the reaction hydrogencarbonate + H(+) = CO2 + H2O. Functionally, reversible hydration of carbon dioxide. Essential to photosynthetic carbon dioxide fixation, supplies CO(2) to RuBisCO (ribulose bisphosphate carboxylase, rbcL-rbcS) in the carboxysome. Loss of activity results in limitation of CO(2) availability to RuBisCO located in the cytoplasm. This chain is Carbonic anhydrase, found in Synechococcus elongatus (strain ATCC 33912 / PCC 7942 / FACHB-805) (Anacystis nidulans R2).